Consider the following 535-residue polypeptide: Phosphoenolpyruvate carboxykinase (ATP) (535 aa).

Arg59, Tyr201, and Lys207 together coordinate substrate. ATP contacts are provided by residues Lys207, His226, and 243-251; that span reads GLSGTGKTT. Mn(2+) is bound by residues Lys207 and His226. Residue Asp264 coordinates Mn(2+). ATP-binding positions include Glu292, Arg328, 444 to 445, and Thr450; that span reads RI. Arg328 contacts substrate.

This sequence belongs to the phosphoenolpyruvate carboxykinase (ATP) family. Mn(2+) serves as cofactor.

It is found in the cytoplasm. It catalyses the reaction oxaloacetate + ATP = phosphoenolpyruvate + ADP + CO2. It participates in carbohydrate biosynthesis; gluconeogenesis. Its function is as follows. Involved in the gluconeogenesis. Catalyzes the conversion of oxaloacetate (OAA) to phosphoenolpyruvate (PEP) through direct phosphoryl transfer between the nucleoside triphosphate and OAA. This is Phosphoenolpyruvate carboxykinase (ATP) from Porphyromonas gingivalis (strain ATCC BAA-308 / W83).